The sequence spans 339 residues: Glyceraldehyde-3-phosphate dehydrogenase (339 aa).

NAD(+) is bound by residues 13–14 (RI), Asp-35, and Lys-84. D-glyceraldehyde 3-phosphate is bound by residues 156 to 158 (SCT), Thr-187, 216 to 217 (TG), and Arg-239. The Nucleophile role is filled by Cys-157. Asn-321 provides a ligand contact to NAD(+).

Belongs to the glyceraldehyde-3-phosphate dehydrogenase family. In terms of assembly, homotetramer.

The protein localises to the cytoplasm. The enzyme catalyses D-glyceraldehyde 3-phosphate + phosphate + NAD(+) = (2R)-3-phospho-glyceroyl phosphate + NADH + H(+). Its pathway is carbohydrate degradation; glycolysis; pyruvate from D-glyceraldehyde 3-phosphate: step 1/5. The protein is Glyceraldehyde-3-phosphate dehydrogenase (G3PD) of Brugia malayi (Filarial nematode worm).